The chain runs to 345 residues: tRNA pseudouridine synthase B (345 aa).

The active-site Nucleophile is Asp39.

This sequence belongs to the pseudouridine synthase TruB family. Type 1 subfamily.

It carries out the reaction uridine(55) in tRNA = pseudouridine(55) in tRNA. Its function is as follows. Responsible for synthesis of pseudouridine from uracil-55 in the psi GC loop of transfer RNAs. This is tRNA pseudouridine synthase B from Rickettsia africae (strain ESF-5).